The sequence spans 86 residues: EMBRYO SURROUNDING FACTOR 1-like protein 2 (86 aa).

The first 21 residues, 1-21, serve as a signal peptide directing secretion; the sequence is MKSHIAIICIIMLSFFSMHEY. 4 disulfide bridges follow: cysteine 39–cysteine 54, cysteine 44–cysteine 82, cysteine 52–cysteine 78, and cysteine 55–cysteine 65.

It belongs to the MEG family.

The sequence is that of EMBRYO SURROUNDING FACTOR 1-like protein 2 (ESFL2) from Arabidopsis thaliana (Mouse-ear cress).